The chain runs to 296 residues: Large ribosomal subunit protein uL15m (296 aa).

The transit peptide at 1–20 (MAASGGSGGKATELLRCLPR) directs the protein to the mitochondrion. The segment at 25–66 (NLRPNPGARHREKRRGRGIHGGRKSGRGHKGETQRGNQPRLG) is disordered. Positions 32–52 (ARHREKRRGRGIHGGRKSGRG) are enriched in basic residues.

Belongs to the universal ribosomal protein uL15 family. Component of the mitochondrial ribosome large subunit (39S) which comprises a 16S rRNA and about 50 distinct proteins.

Its subcellular location is the mitochondrion. This chain is Large ribosomal subunit protein uL15m (mrpl15), found in Xenopus laevis (African clawed frog).